We begin with the raw amino-acid sequence, 309 residues long: Malate dehydrogenase (309 aa).

NAD(+) contacts are provided by residues 10 to 15 (GAGNVG) and aspartate 34. Substrate contacts are provided by arginine 83 and arginine 89. Residues asparagine 96 and 119-121 (VSN) each bind NAD(+). Substrate contacts are provided by asparagine 121 and arginine 152. The Proton acceptor role is filled by histidine 176.

It belongs to the LDH/MDH superfamily. MDH type 3 family.

The enzyme catalyses (S)-malate + NAD(+) = oxaloacetate + NADH + H(+). Catalyzes the reversible oxidation of malate to oxaloacetate. In Heliobacterium modesticaldum (strain ATCC 51547 / Ice1), this protein is Malate dehydrogenase.